The primary structure comprises 545 residues: CTP synthase (545 aa).

Residues 1–266 (MKTNYIFVTG…DDYICKRFSL (266 aa)) are amidoligase domain. Ser-14 is a CTP binding site. Ser-14 serves as a coordination point for UTP. Residues 15 to 20 (SLGKGI) and Asp-72 contribute to the ATP site. Mg(2+) contacts are provided by Asp-72 and Glu-140. CTP contacts are provided by residues 147–149 (DIE), 187–192 (KTKPTQ), and Lys-223. Residues 187–192 (KTKPTQ) and Lys-223 each bind UTP. An ATP-binding site is contributed by 239–241 (KDV). Positions 291–542 (TIGMVGKYVE…VKAAGKYQKG (252 aa)) constitute a Glutamine amidotransferase type-1 domain. Gly-352 is a binding site for L-glutamine. Catalysis depends on Cys-379, which acts as the Nucleophile; for glutamine hydrolysis. L-glutamine is bound by residues 380–383 (LGMQ), Glu-403, and Arg-470. Residues His-515 and Glu-517 contribute to the active site.

Belongs to the CTP synthase family. In terms of assembly, homotetramer.

The catalysed reaction is UTP + L-glutamine + ATP + H2O = CTP + L-glutamate + ADP + phosphate + 2 H(+). The enzyme catalyses L-glutamine + H2O = L-glutamate + NH4(+). It carries out the reaction UTP + NH4(+) + ATP = CTP + ADP + phosphate + 2 H(+). Its pathway is pyrimidine metabolism; CTP biosynthesis via de novo pathway; CTP from UDP: step 2/2. With respect to regulation, allosterically activated by GTP, when glutamine is the substrate; GTP has no effect on the reaction when ammonia is the substrate. The allosteric effector GTP functions by stabilizing the protein conformation that binds the tetrahedral intermediate(s) formed during glutamine hydrolysis. Inhibited by the product CTP, via allosteric rather than competitive inhibition. Its function is as follows. Catalyzes the ATP-dependent amination of UTP to CTP with either L-glutamine or ammonia as the source of nitrogen. Regulates intracellular CTP levels through interactions with the four ribonucleotide triphosphates. This Photorhabdus laumondii subsp. laumondii (strain DSM 15139 / CIP 105565 / TT01) (Photorhabdus luminescens subsp. laumondii) protein is CTP synthase.